Here is a 177-residue protein sequence, read N- to C-terminus: Large ribosomal subunit protein uL6 (177 aa).

This sequence belongs to the universal ribosomal protein uL6 family. Part of the 50S ribosomal subunit.

Functionally, this protein binds to the 23S rRNA, and is important in its secondary structure. It is located near the subunit interface in the base of the L7/L12 stalk, and near the tRNA binding site of the peptidyltransferase center. The polypeptide is Large ribosomal subunit protein uL6 (Vibrio cholerae serotype O1 (strain ATCC 39315 / El Tor Inaba N16961)).